Consider the following 431-residue polypeptide: NADH-quinone oxidoreductase subunit D 2 (431 aa).

The disordered stretch occupies residues 1-27 (MNDHKGLGGLDTEATPGSFGAGEPPRA).

Belongs to the complex I 49 kDa subunit family. NDH-1 is composed of 14 different subunits. Subunits NuoB, C, D, E, F, and G constitute the peripheral sector of the complex.

It localises to the cell inner membrane. It carries out the reaction a quinone + NADH + 5 H(+)(in) = a quinol + NAD(+) + 4 H(+)(out). Functionally, NDH-1 shuttles electrons from NADH, via FMN and iron-sulfur (Fe-S) centers, to quinones in the respiratory chain. The immediate electron acceptor for the enzyme in this species is believed to be ubiquinone. Couples the redox reaction to proton translocation (for every two electrons transferred, four hydrogen ions are translocated across the cytoplasmic membrane), and thus conserves the redox energy in a proton gradient. This chain is NADH-quinone oxidoreductase subunit D 2, found in Anaeromyxobacter sp. (strain Fw109-5).